The following is a 76-amino-acid chain: Small ribosomal subunit protein bS16 (76 aa).

The protein belongs to the bacterial ribosomal protein bS16 family.

In Helicobacter acinonychis (strain Sheeba), this protein is Small ribosomal subunit protein bS16.